Here is a 117-residue protein sequence, read N- to C-terminus: Cuticular protein 47Eg (117 aa).

Residues M1–A16 form the signal peptide. Residues V31–P97 form the Chitin-binding type R&amp;R domain.

Component of the larval cuticle. This chain is Cuticular protein 47Eg (Cpr47Eg), found in Drosophila melanogaster (Fruit fly).